The primary structure comprises 77 residues: Large ribosomal subunit protein eL20 (77 aa).

Belongs to the eukaryotic ribosomal protein eL20 family. Part of the 50S ribosomal subunit. Binds 23S rRNA.

This is Large ribosomal subunit protein eL20 from Pyrococcus abyssi (strain GE5 / Orsay).